The sequence spans 119 residues: DNA-binding protein inhibitor ID-3 (119 aa).

Residues arginine 28 to leucine 80 form the bHLH domain.

In terms of assembly, homodimer, and heterodimer with other HLH proteins. Interacts with COPS5 and COPS7A. Interacts with IFI204. Interacts with GATA4 and NKX2-5. Interacts with ANKRD2; both proteins cooperate in myoblast differentiation. Interacts with CLOCK and BMAL1.

It localises to the nucleus. Its function is as follows. Transcriptional regulator (lacking a basic DNA binding domain) which negatively regulates the basic helix-loop-helix (bHLH) transcription factors by forming heterodimers and inhibiting their DNA binding and transcriptional activity. Implicated in regulating a variety of cellular processes, including cellular growth, senescence, differentiation, apoptosis, angiogenesis, and neoplastic transformation. Involved in myogenesis by inhibiting skeletal muscle and cardiac myocyte differentiation and promoting muscle precursor cells proliferation. Inhibits the binding of E2A-containing protein complexes to muscle creatine kinase E-box enhancer. Regulates the circadian clock by repressing the transcriptional activator activity of the CLOCK-BMAL1 heterodimer. The chain is DNA-binding protein inhibitor ID-3 (ID3) from Bos taurus (Bovine).